The primary structure comprises 650 residues: DNA gyrase subunit B (650 aa).

Positions 429 to 543 (NELFIVEGDS…AGYVYIAQPP (115 aa)) constitute a Toprim domain. Mg(2+) contacts are provided by Glu-435, Asp-508, and Asp-510.

Belongs to the type II topoisomerase GyrB family. Heterotetramer, composed of two GyrA and two GyrB chains. In the heterotetramer, GyrA contains the active site tyrosine that forms a transient covalent intermediate with DNA, while GyrB binds cofactors and catalyzes ATP hydrolysis. Mg(2+) serves as cofactor. It depends on Mn(2+) as a cofactor. Requires Ca(2+) as cofactor.

It localises to the cytoplasm. It catalyses the reaction ATP-dependent breakage, passage and rejoining of double-stranded DNA.. Functionally, a type II topoisomerase that negatively supercoils closed circular double-stranded (ds) DNA in an ATP-dependent manner to modulate DNA topology and maintain chromosomes in an underwound state. Negative supercoiling favors strand separation, and DNA replication, transcription, recombination and repair, all of which involve strand separation. Also able to catalyze the interconversion of other topological isomers of dsDNA rings, including catenanes and knotted rings. Type II topoisomerases break and join 2 DNA strands simultaneously in an ATP-dependent manner. This chain is DNA gyrase subunit B, found in Streptococcus pyogenes serotype M18 (strain MGAS8232).